The sequence spans 93 residues: Protein F-93 (93 aa).

Homodimer.

Probable transcription factor that recognizes a (pseudo-)palindromic DNA target sequence. This Saccharolobus solfataricus (Sulfolobus solfataricus) protein is Protein F-93.